We begin with the raw amino-acid sequence, 260 residues long: Uroplakin-1b (260 aa).

Topologically, residues 1-12 (MAKDDSSVRCFQ) are cytoplasmic. The chain crosses the membrane as a helical span at residues 13 to 38 (GLLIFGNVIVGMCGIALTAECIFFVS). The Extracellular portion of the chain corresponds to 39–60 (DQHSLYPLLEATDNDDIYGAAW). Residues 61 to 81 (IGMFVGICLFCLSVLGIVGIM) form a helical membrane-spanning segment. At 82–86 (KSNRK) the chain is on the cytoplasmic side. A helical transmembrane segment spans residues 87 to 107 (ILLAYFILMFIVYGFEVASCI). Residues 108–229 (TAATQRDFFT…ELISGPMNRH (122 aa)) are Extracellular-facing. A helical membrane pass occupies residues 230 to 250 (AWGVAWFGFAILCWTFWVLLG). At 251–260 (TMFYWSRIEY) the chain is on the cytoplasmic side.

The protein belongs to the tetraspanin (TM4SF) family. In terms of assembly, heterodimer with uroplakin-3A (UPK3A) or uroplakin-3B (UPK3B).

The protein resides in the membrane. In terms of biological role, component of the asymmetric unit membrane (AUM); a highly specialized biomembrane elaborated by terminally differentiated urothelial cells. In Neovison vison (American mink), this protein is Uroplakin-1b (UPK1B).